The following is a 115-amino-acid chain: Photosystem II reaction center Psb28 protein (115 aa).

This sequence belongs to the Psb28 family. Part of the photosystem II complex.

It is found in the plastid. The protein localises to the chloroplast thylakoid membrane. The chain is Photosystem II reaction center Psb28 protein from Pyropia yezoensis (Susabi-nori).